The sequence spans 317 residues: Glycine--tRNA ligase alpha subunit (317 aa).

This sequence belongs to the class-II aminoacyl-tRNA synthetase family. As to quaternary structure, tetramer of two alpha and two beta subunits.

The protein localises to the cytoplasm. It carries out the reaction tRNA(Gly) + glycine + ATP = glycyl-tRNA(Gly) + AMP + diphosphate. The chain is Glycine--tRNA ligase alpha subunit from Pseudomonas fluorescens (strain ATCC BAA-477 / NRRL B-23932 / Pf-5).